The sequence spans 926 residues: Taz1-interacting factor 1 (926 aa).

2 coiled-coil regions span residues 461-496 (REAV…SHQN) and 548-671 (SFTD…LKQK). S548 bears the Phosphoserine mark. Residue T550 is modified to Phosphothreonine. S552 bears the Phosphoserine mark.

It belongs to the ATG11 family. Homodimer and potential homooligomers. Interacts with taz1.

It is found in the preautophagosomal structure membrane. It localises to the vacuole membrane. In terms of biological role, involved in cytoplasm to vacuole transport (Cvt), pexophagy, mitophagy and nucleophagy. Recruits mitochondria for their selective degradation via autophagy (mitophagy) during starvation. Works as scaffold proteins that recruit ATG proteins to the preautophagosome (PAS), the site of vesicle/autophagosome formation. Required for atg9 anterograde transport from the mitochondria to the PAS. Required for nitrogen starvation-induced sexual development and for entering the dormant G0 state. This Schizosaccharomyces pombe (strain 972 / ATCC 24843) (Fission yeast) protein is Taz1-interacting factor 1 (taf1).